We begin with the raw amino-acid sequence, 131 residues long: Ribosome-binding factor A (131 aa).

Belongs to the RbfA family. In terms of assembly, monomer. Binds 30S ribosomal subunits, but not 50S ribosomal subunits or 70S ribosomes.

The protein resides in the cytoplasm. One of several proteins that assist in the late maturation steps of the functional core of the 30S ribosomal subunit. Associates with free 30S ribosomal subunits (but not with 30S subunits that are part of 70S ribosomes or polysomes). Required for efficient processing of 16S rRNA. May interact with the 5'-terminal helix region of 16S rRNA. This chain is Ribosome-binding factor A, found in Mannheimia succiniciproducens (strain KCTC 0769BP / MBEL55E).